We begin with the raw amino-acid sequence, 287 residues long: Formamidopyrimidine-DNA glycosylase (287 aa).

The active-site Schiff-base intermediate with DNA is P2. E3 functions as the Proton donor in the catalytic mechanism. The active-site Proton donor; for beta-elimination activity is K60. 2 residues coordinate DNA: H100 and R119. Residues 249–283 (QVYGREGEPCRHCGTVIAKIKLGGRSAHFCPQCQP) form an FPG-type zinc finger. The active-site Proton donor; for delta-elimination activity is the R273.

It belongs to the FPG family. Monomer. It depends on Zn(2+) as a cofactor.

The enzyme catalyses Hydrolysis of DNA containing ring-opened 7-methylguanine residues, releasing 2,6-diamino-4-hydroxy-5-(N-methyl)formamidopyrimidine.. The catalysed reaction is 2'-deoxyribonucleotide-(2'-deoxyribose 5'-phosphate)-2'-deoxyribonucleotide-DNA = a 3'-end 2'-deoxyribonucleotide-(2,3-dehydro-2,3-deoxyribose 5'-phosphate)-DNA + a 5'-end 5'-phospho-2'-deoxyribonucleoside-DNA + H(+). In terms of biological role, involved in base excision repair of DNA damaged by oxidation or by mutagenic agents. Acts as a DNA glycosylase that recognizes and removes damaged bases. Has a preference for oxidized purines, such as 7,8-dihydro-8-oxoguanine (8-oxoG). Has AP (apurinic/apyrimidinic) lyase activity and introduces nicks in the DNA strand. Cleaves the DNA backbone by beta-delta elimination to generate a single-strand break at the site of the removed base with both 3'- and 5'-phosphates. The polypeptide is Formamidopyrimidine-DNA glycosylase (mutM) (Synechocystis sp. (strain ATCC 27184 / PCC 6803 / Kazusa)).